The primary structure comprises 73 residues: Large ribosomal subunit protein eL20 (73 aa).

It belongs to the eukaryotic ribosomal protein eL20 family. In terms of assembly, part of the 50S ribosomal subunit. Binds 23S rRNA.

This is Large ribosomal subunit protein eL20 from Methanococcus aeolicus (strain ATCC BAA-1280 / DSM 17508 / OCM 812 / Nankai-3).